Reading from the N-terminus, the 66-residue chain is U10-theraphotoxin-Cg1a 3 (66 aa).

A signal peptide spans 1-21; that stretch reads MKTSVLFVIFGLALLFCLSFA. Positions 22–29 are excised as a propeptide; it reads DELEDTGR. Intrachain disulfides connect C31–C46, C38–C51, and C45–C58.

This sequence belongs to the neurotoxin 10 (Hwtx-1) family. 29 (Jztx-13) subfamily. In terms of tissue distribution, expressed by the venom gland.

Its subcellular location is the secreted. Its function is as follows. Probable ion channel inhibitor. In Chilobrachys guangxiensis (Chinese earth tiger tarantula), this protein is U10-theraphotoxin-Cg1a 3.